The primary structure comprises 336 residues: Ketol-acid reductoisomerase (NADP(+)) (336 aa).

Residues 2 to 181 (AKVYYEKDVM…GATRAGVLET (180 aa)) form the KARI N-terminal Rossmann domain. NADP(+)-binding positions include 25-28 (YGSQ), R48, S52, and 82-85 (DELQ). H107 is an active-site residue. G133 is a binding site for NADP(+). Residues 182-327 (TFKEETETDL…RQLREMMPFV (146 aa)) form the KARI C-terminal knotted domain. The Mg(2+) site is built by D190, E194, E226, and E230. S251 is a substrate binding site.

The protein belongs to the ketol-acid reductoisomerase family. Mg(2+) is required as a cofactor.

It carries out the reaction (2R)-2,3-dihydroxy-3-methylbutanoate + NADP(+) = (2S)-2-acetolactate + NADPH + H(+). The enzyme catalyses (2R,3R)-2,3-dihydroxy-3-methylpentanoate + NADP(+) = (S)-2-ethyl-2-hydroxy-3-oxobutanoate + NADPH + H(+). Its pathway is amino-acid biosynthesis; L-isoleucine biosynthesis; L-isoleucine from 2-oxobutanoate: step 2/4. It participates in amino-acid biosynthesis; L-valine biosynthesis; L-valine from pyruvate: step 2/4. In terms of biological role, involved in the biosynthesis of branched-chain amino acids (BCAA). Catalyzes an alkyl-migration followed by a ketol-acid reduction of (S)-2-acetolactate (S2AL) to yield (R)-2,3-dihydroxy-isovalerate. In the isomerase reaction, S2AL is rearranged via a Mg-dependent methyl migration to produce 3-hydroxy-3-methyl-2-ketobutyrate (HMKB). In the reductase reaction, this 2-ketoacid undergoes a metal-dependent reduction by NADPH to yield (R)-2,3-dihydroxy-isovalerate. This Bacillus cytotoxicus (strain DSM 22905 / CIP 110041 / 391-98 / NVH 391-98) protein is Ketol-acid reductoisomerase (NADP(+)).